We begin with the raw amino-acid sequence, 92 residues long: Small ribosomal subunit protein uS19c (92 aa).

It belongs to the universal ribosomal protein uS19 family.

It is found in the plastid. The protein localises to the chloroplast. Its function is as follows. Protein S19 forms a complex with S13 that binds strongly to the 16S ribosomal RNA. This is Small ribosomal subunit protein uS19c (rps19) from Anthoceros angustus (Hornwort).